Here is a 106-residue protein sequence, read N- to C-terminus: Nucleoid-associated protein Noc_2594 (106 aa).

Disordered regions lie at residues 1–20 (MKGG…SNME) and 85–106 (QSKE…KLPL). Polar residues predominate over residues 10–20 (KQAQQLQSNME).

It belongs to the YbaB/EbfC family. In terms of assembly, homodimer.

Its subcellular location is the cytoplasm. It localises to the nucleoid. Binds to DNA and alters its conformation. May be involved in regulation of gene expression, nucleoid organization and DNA protection. The sequence is that of Nucleoid-associated protein Noc_2594 from Nitrosococcus oceani (strain ATCC 19707 / BCRC 17464 / JCM 30415 / NCIMB 11848 / C-107).